A 2531-amino-acid chain; its full sequence is Mediator of RNA polymerase II transcription subunit 12 (2531 aa).

4 disordered regions span residues 1 to 41 (MLSM…VKHG), 204 to 283 (QNHD…GSVM), 584 to 604 (VSRRREEDQVEPRPPYEPKQD), and 742 to 762 (TTATKTSPPPPAPPPTTTHGF). The span at 210 to 247 (SSNGTTSGSLTAAGNGPASNGSTGTSSINSVTGSSAST) shows a compositional bias: low complexity. The segment covering 586–604 (RRREEDQVEPRPPYEPKQD) has biased composition (basic and acidic residues). A Phosphothreonine modification is found at T745. S748 and S781 each carry phosphoserine. The segment covering 748–757 (SPPPPAPPPT) has biased composition (pro residues). The span at 796–805 (EKGQQHEAPD) shows a compositional bias: basic and acidic residues. The segment at 796–824 (EKGQQHEAPDSPKIGPPGDGETNPGGSIS) is disordered. Residues S806 and S1356 each carry the phosphoserine modification. T1360 is modified (phosphothreonine). 2 stretches are compositionally biased toward polar residues: residues 1585–1595 (VSKSDCNSSGS) and 1901–1910 (TPSSVDQSPS). 4 disordered regions span residues 1585-1608 (VSKSDCNSSGSGDEREKSNSCHSS), 1898-2092 (KADT…NQYA), 2114-2218 (QALS…GMAP), and 2469-2508 (MGGGAGGGMGAGPQQGGGAVGGGAGGGMVPQQQSMNQQQT). Positions 1919–1933 (GRGKGTTTRKRKPKN) are enriched in basic residues. 2 stretches are compositionally biased toward low complexity: residues 1938-2038 (PVVN…QQLN) and 2045-2055 (QPNPQMNFMQQ). Positions 2056 to 2066 (GPGGGGAGPQG) are enriched in gly residues. 3 stretches are compositionally biased toward low complexity: residues 2067–2080 (MPGQQQQWHNAPQQ), 2121–2132 (RQRQPFQQQAQQ), and 2139–2205 (NPMQ…QQQQ). The segment covering 2469–2496 (MGGGAGGGMGAGPQQGGGAVGGGAGGGM) has biased composition (gly residues). A compositionally biased stretch (low complexity) spans 2497 to 2507 (VPQQQSMNQQQ).

The protein belongs to the Mediator complex subunit 12 family. As to quaternary structure, component of the Cdk8 module of the Mediator complex, composed of CycC, Cdk8, kto and skd.

It localises to the nucleus. Component of the Mediator complex, a coactivator involved in regulated gene transcription of nearly all RNA polymerase II-dependent genes. Mediator functions as a bridge to convey information from gene-specific regulatory proteins to the basal RNA polymerase II transcription machinery. Mediator is recruited to promoters by direct interactions with regulatory proteins and serves as a scaffold for the assembly of a functional preinitiation complex with RNA polymerase II and the general transcription factors. Required for leg and eye development and macrochaete specification or differentiation. This Drosophila melanogaster (Fruit fly) protein is Mediator of RNA polymerase II transcription subunit 12 (kto).